Here is a 506-residue protein sequence, read N- to C-terminus: Histidine ammonia-lyase (506 aa).

A cross-link (5-imidazolinone (Ala-Gly)) is located at residues Ala-143–Gly-145. Ser-144 bears the 2,3-didehydroalanine (Ser) mark.

Belongs to the PAL/histidase family. Contains an active site 4-methylidene-imidazol-5-one (MIO), which is formed autocatalytically by cyclization and dehydration of residues Ala-Ser-Gly.

It is found in the cytoplasm. The enzyme catalyses L-histidine = trans-urocanate + NH4(+). The protein operates within amino-acid degradation; L-histidine degradation into L-glutamate; N-formimidoyl-L-glutamate from L-histidine: step 1/3. In Enterobacter sp. (strain 638), this protein is Histidine ammonia-lyase.